A 258-amino-acid polypeptide reads, in one-letter code: tRNA pseudouridine synthase A (258 aa).

The Nucleophile role is filled by aspartate 52. Tyrosine 110 is a binding site for substrate.

The protein belongs to the tRNA pseudouridine synthase TruA family. As to quaternary structure, homodimer.

It catalyses the reaction uridine(38/39/40) in tRNA = pseudouridine(38/39/40) in tRNA. In terms of biological role, formation of pseudouridine at positions 38, 39 and 40 in the anticodon stem and loop of transfer RNAs. The protein is tRNA pseudouridine synthase A of Francisella tularensis subsp. tularensis (strain FSC 198).